We begin with the raw amino-acid sequence, 190 residues long: Protein SYM1 (190 aa).

4 helical membrane-spanning segments follow: residues 16–36, 54–74, 91–111, and 131–151; these read PVLG…VIAQ, IVTW…RTLE, LDQF…MTFM, and LQAN…LVPL.

The protein belongs to the peroxisomal membrane protein PXMP2/4 family.

It is found in the mitochondrion inner membrane. May be involved in cellular response to stress. Required to maintain mitochondrial DNA (mtDNA) integrity and stability. This chain is Protein SYM1 (SYM1), found in Cryptococcus neoformans var. neoformans serotype D (strain B-3501A) (Filobasidiella neoformans).